We begin with the raw amino-acid sequence, 232 residues long: TIR domain-containing adapter molecule 2 (232 aa).

A compositionally biased stretch (basic and acidic residues) spans 1-39 (MGVGKSKLDKCPLSWHKKDSVDADQDGHESDSKNSEEAC). The disordered stretch occupies residues 1-70 (MGVGKSKLDK…EAKGAGPEEQ (70 aa)). Glycine 2 carries N-myristoyl glycine lipidation. One can recognise a TIR domain in the interval 74-226 (EFLKFVILHA…SIWKETRSVS (153 aa)). Phosphotyrosine is present on tyrosine 164.

In terms of assembly, homodimer. Interacts with TLR4, TICAM1, IRF3 and IRF7 in response to LPS. Interacts with IL1R1, IL1RAP, IRAK2, IRAK3 and TRAF6. Interacts with protein kinase-inactive mutants of IRAK1 and IRAK4. Isoform 1 interacts with isoform 2; the interaction occurs in late endosomes and disrupts the interaction between isoform 1 and TICAM1. Interacts with MYD88; the interaction decreases after IL-18 stimulation in a time-dependent manner. Interacts with IL18R1 and IL18RAP. Interacts with TLR2. Interacts with RAB11FIP2. Myristoylated. Required for membrane association which is critical for its ability to initiate efficient signaling. Post-translationally, phosphorylated by PRKCE in response to LPS. Phosphorylation is essential for its function. It is depleted from the membrane upon phosphorylation. Tyrosine phosphorylation is inhibited by phosphatase PTPN4.

It localises to the cytoplasm. The protein resides in the golgi apparatus. Its subcellular location is the cell membrane. It is found in the early endosome. The protein localises to the late endosome. It localises to the endoplasmic reticulum. The protein resides in the cell projection. Its subcellular location is the phagocytic cup. In terms of biological role, functions as a sorting adapter in different signaling pathways to facilitate downstream signaling leading to type I interferon induction. In TLR4 signaling, physically bridges TLR4 and TICAM1 and functionally transmits signal to TICAM1 in early endosomes after endocytosis of TLR4. In TLR2 signaling, physically bridges TLR2 and MYD88 and is required for the TLR2-dependent movement of MYD88 to endosomes following ligand engagement. Involved in IL-18 signaling and is proposed to function as a sorting adapter for MYD88 in IL-18 signaling during adaptive immune response. Forms a complex with RAB11FIP2 that is recruited to the phagosomes to promote the activation of the actin-regulatory GTPases RAC1 and CDC42 and subsequent phagocytosis of Gram-negative bacteria. This Mus musculus (Mouse) protein is TIR domain-containing adapter molecule 2 (Ticam2).